The sequence spans 392 residues: Phosphoglycerate kinase (392 aa).

Residues 21-23, Arg-36, 59-62, Arg-118, and Arg-151 each bind substrate; these read DFN and HLGR. Residues Lys-201, Gly-292, Glu-323, and 349-352 each bind ATP; that span reads GGDS.

This sequence belongs to the phosphoglycerate kinase family. Monomer.

The protein resides in the cytoplasm. It catalyses the reaction (2R)-3-phosphoglycerate + ATP = (2R)-3-phospho-glyceroyl phosphate + ADP. The protein operates within carbohydrate degradation; glycolysis; pyruvate from D-glyceraldehyde 3-phosphate: step 2/5. This is Phosphoglycerate kinase from Borrelia hermsii (strain HS1 / DAH).